The primary structure comprises 74 residues: Translational regulator CsrA (74 aa).

The protein belongs to the CsrA/RsmA family. As to quaternary structure, homodimer; the beta-strands of each monomer intercalate to form a hydrophobic core, while the alpha-helices form wings that extend away from the core.

Its subcellular location is the cytoplasm. A translational regulator that binds mRNA to regulate translation initiation and/or mRNA stability. Usually binds in the 5'-UTR at or near the Shine-Dalgarno sequence preventing ribosome-binding, thus repressing translation. Its main target seems to be the major flagellin gene, while its function is anatagonized by FliW. This is Translational regulator CsrA from Alkaliphilus oremlandii (strain OhILAs) (Clostridium oremlandii (strain OhILAs)).